The chain runs to 356 residues: Poly(rC)-binding protein 1 (356 aa).

Met1 carries the N-acetylmethionine modification. 2 consecutive KH domains span residues 13 to 75 and 97 to 162; these read TLTI…FAMI and PVTL…VKQI. A Glycyl lysine isopeptide (Lys-Gly) (interchain with G-Cter in SUMO2) cross-link involves residue Lys115. Residues Ser173, Ser189, Ser190, Ser246, Ser264, and Ser273 each carry the phosphoserine modification. The 65-residue stretch at 279–343 folds into the KH 3 domain; it reads QTTHELTIPN…ASISLAQYLI (65 aa).

Phosphorylated; lowers poly(rC)-binding activity.

Its subcellular location is the nucleus. It localises to the cytoplasm. Single-stranded nucleic acid binding protein that binds preferentially to oligo dC. Together with PCBP2, required for erythropoiesis, possibly by regulating mRNA splicing. In Bos taurus (Bovine), this protein is Poly(rC)-binding protein 1 (PCBP1).